Here is a 67-residue protein sequence, read N- to C-terminus: DNA gyrase inhibitor YacG (67 aa).

Cysteine 8, cysteine 11, cysteine 27, and cysteine 31 together coordinate Zn(2+).

This sequence belongs to the DNA gyrase inhibitor YacG family. Interacts with GyrB. Requires Zn(2+) as cofactor.

Inhibits all the catalytic activities of DNA gyrase by preventing its interaction with DNA. Acts by binding directly to the C-terminal domain of GyrB, which probably disrupts DNA binding by the gyrase. The protein is DNA gyrase inhibitor YacG of Ralstonia pickettii (strain 12J).